The sequence spans 265 residues: Ribosomal RNA small subunit methyltransferase A (265 aa).

Residues His17, Leu19, Gly44, Glu65, Asp90, and Asn112 each coordinate S-adenosyl-L-methionine.

Belongs to the class I-like SAM-binding methyltransferase superfamily. rRNA adenine N(6)-methyltransferase family. RsmA subfamily.

Its subcellular location is the cytoplasm. The enzyme catalyses adenosine(1518)/adenosine(1519) in 16S rRNA + 4 S-adenosyl-L-methionine = N(6)-dimethyladenosine(1518)/N(6)-dimethyladenosine(1519) in 16S rRNA + 4 S-adenosyl-L-homocysteine + 4 H(+). Specifically dimethylates two adjacent adenosines (A1518 and A1519) in the loop of a conserved hairpin near the 3'-end of 16S rRNA in the 30S particle. May play a critical role in biogenesis of 30S subunits. The chain is Ribosomal RNA small subunit methyltransferase A from Xylella fastidiosa (strain 9a5c).